The chain runs to 324 residues: Probable nicotianamine synthase 4 (324 aa).

The protein belongs to the nicotianamine synthase (NAS)-like family.

It catalyses the reaction 3 S-adenosyl-L-methionine = nicotianamine + 3 S-methyl-5'-thioadenosine + 3 H(+). In terms of biological role, synthesizes nicotianamine, a polyamine which serves as a sensor for the physiological iron status within the plant, and/or might be involved in the transport of iron. The chain is Probable nicotianamine synthase 4 (NAS4) from Arabidopsis thaliana (Mouse-ear cress).